The following is a 143-amino-acid chain: Subtelomeric hrmA-associated cluster protein cgnA (143 aa).

G-Q-I/R/S repeat units follow at residues 11–13 (GQI), 14–16 (GPI), 17–19 (GQR), 20–22 (GQS), 23–25 (GQR), 26–28 (GQS), 29–31 (GQR), 32–34 (GQS), 35–37 (GQI), 38–40 (GQS), 41–43 (GQS), 44–46 (GQS), 47–49 (GQI), 50–52 (GQI), 53–55 (GQI), 56–58 (GQI), 59–61 (GQI), 62–64 (GQI), 65–67 (GQI), 68–70 (GQI), 71–73 (GQI), 74–76 (GQI), 77–79 (GQI), 80–82 (GQI), 83–85 (GQI), 86–88 (GQI), 89–91 (GQI), 92–94 (GQI), and 95–97 (GQA). One can recognise a Collagen-like domain in the interval 11-68 (GQIGPIGQRGQSGQRGQSGQRGQSGQIGQSGQSGQSGQIGQIGQIGQIGQIGQIGQIG). Positions 11–97 (GQIGPIGQRG…IGQIGQIGQA (87 aa)) are 29 X 3 AA approximate tandem repeats of G-Q-I/R/S. A disordered region spans residues 16 to 49 (IGQRGQSGQRGQSGQRGQSGQIGQSGQSGQSGQI).

The protein resides in the secreted. In terms of biological role, collagen-like protein; part of the subtelomeric hrmA-associated cluster (HAC) containing genes that alter the hyphal surface (such as reduced total chitin or increased beta-glucan exposure) and perturb inter-hyphal interactions within the developing biofilms, resulting in a loss of vertically aligned polarized growing filaments. Consequently, this hypoxia-typic morphotype (called H-MORPH) with altered biofilm architecture leads to increased hypoxia fitness, increased host inflammation, rapid disease progression, and mortality in a murine model of invasive aspergillosis. CgnA is directly involved in the reduction of total surface chitin and the increase of beta-glucan exposure, and mediates the detachment of the extracellular matrix and especially of its component galactosaminogalactan (GAG). This chain is Subtelomeric hrmA-associated cluster protein cgnA, found in Aspergillus fumigatus (strain ATCC MYA-4609 / CBS 101355 / FGSC A1100 / Af293) (Neosartorya fumigata).